Reading from the N-terminus, the 365-residue chain is 1-deoxy-D-xylulose 5-phosphate reductoisomerase (365 aa).

8 residues coordinate NADPH: T7, G8, S9, I10, A31, K32, N33, and N114. K115 serves as a coordination point for 1-deoxy-D-xylulose 5-phosphate. E116 provides a ligand contact to NADPH. D134 contacts Mn(2+). Residues S135, E136, S158, and H181 each contribute to the 1-deoxy-D-xylulose 5-phosphate site. Residue E136 coordinates Mn(2+). G187 provides a ligand contact to NADPH. The 1-deoxy-D-xylulose 5-phosphate site is built by S194, N199, K200, and E203. E203 contributes to the Mn(2+) binding site.

The protein belongs to the DXR family. It depends on Mg(2+) as a cofactor. Mn(2+) is required as a cofactor.

The enzyme catalyses 2-C-methyl-D-erythritol 4-phosphate + NADP(+) = 1-deoxy-D-xylulose 5-phosphate + NADPH + H(+). Its pathway is isoprenoid biosynthesis; isopentenyl diphosphate biosynthesis via DXP pathway; isopentenyl diphosphate from 1-deoxy-D-xylulose 5-phosphate: step 1/6. In terms of biological role, catalyzes the NADPH-dependent rearrangement and reduction of 1-deoxy-D-xylulose-5-phosphate (DXP) to 2-C-methyl-D-erythritol 4-phosphate (MEP). The polypeptide is 1-deoxy-D-xylulose 5-phosphate reductoisomerase (Campylobacter curvus (strain 525.92)).